Here is a 497-residue protein sequence, read N- to C-terminus: tRNA-2-methylthio-N(6)-dimethylallyladenosine synthase (497 aa).

The region spanning 4 to 120 (RSYEVRTFGC…LPVLLERARH (117 aa)) is the MTTase N-terminal domain. Residues cysteine 13, cysteine 49, cysteine 83, cysteine 157, cysteine 161, and cysteine 164 each contribute to the [4Fe-4S] cluster site. Positions 143 to 374 (RASHHSAWVS…ALQDEVSWAQ (232 aa)) constitute a Radical SAM core domain. Residues 376-445 (RELVGRRVEL…PHHLTADGPL (70 aa)) enclose the TRAM domain.

The protein belongs to the methylthiotransferase family. MiaB subfamily. Monomer. Requires [4Fe-4S] cluster as cofactor.

The protein resides in the cytoplasm. It carries out the reaction N(6)-dimethylallyladenosine(37) in tRNA + (sulfur carrier)-SH + AH2 + 2 S-adenosyl-L-methionine = 2-methylsulfanyl-N(6)-dimethylallyladenosine(37) in tRNA + (sulfur carrier)-H + 5'-deoxyadenosine + L-methionine + A + S-adenosyl-L-homocysteine + 2 H(+). Catalyzes the methylthiolation of N6-(dimethylallyl)adenosine (i(6)A), leading to the formation of 2-methylthio-N6-(dimethylallyl)adenosine (ms(2)i(6)A) at position 37 in tRNAs that read codons beginning with uridine. This chain is tRNA-2-methylthio-N(6)-dimethylallyladenosine synthase, found in Frankia alni (strain DSM 45986 / CECT 9034 / ACN14a).